The chain runs to 440 residues: Inner membrane metabolite transport protein YhjE (440 aa).

Topologically, residues 1-34 (MQATATTLDHEQEYTPINSRNKVLVASLIGTAIE) are cytoplasmic. A helical transmembrane segment spans residues 35-55 (FFDFYIYATAAVIVFPHIFFP). Residues 56–66 (QGDPTAATLQS) are Periplasmic-facing. A helical transmembrane segment spans residues 67–87 (LATFAIAFVARPIGSAVFGHF). Residues 88-108 (GDRVGRKATLVASLLTMGIST) lie on the Cytoplasmic side of the membrane. 2 helical membrane-spanning segments follow: residues 109 to 129 (VVIGLLPGYATIGIFAPLLLA) and 130 to 150 (LARFGQGLGLGGEWGGAALLA). Residues 151 to 167 (TENAPPRKRALYGSFPQ) are Cytoplasmic-facing. A helical membrane pass occupies residues 168–188 (LGAPIGFFFANGTFLLLSWLL). At 189–192 (TDEQ) the chain is on the periplasmic side. A helical transmembrane segment spans residues 193–213 (FMSWGWRVPFIFSAVLVIIGL). Residues 214–248 (YVRVSLHESPVFEKVAKAKKQVKIPLGTLLTKHVR) are Cytoplasmic-facing. Residues 249–269 (VTVLGTFIMLATYTLFYIMTV) traverse the membrane as a helical segment. Residues 270-289 (YSMTFSTAAAPVGLGLPRNE) lie on the Periplasmic side of the membrane. Residues 290-310 (VLWMLMMAVIGFGVMVPVAGL) traverse the membrane as a helical segment. Topologically, residues 311–320 (LADAFGRRKS) are cytoplasmic. The helical transmembrane segment at 321–341 (MVIITTLIILFALFAFNPLLG) threads the bilayer. Residues 342–345 (SGNP) are Periplasmic-facing. A helical transmembrane segment spans residues 346–366 (ILVFAFLLLGLSLMGLTFGPM). Residues 367 to 384 (GALLPELFPTEVRYTGAS) lie on the Cytoplasmic side of the membrane. The chain crosses the membrane as a helical span at residues 385–405 (FSYNVASILGASVAPYIAAWL). At 406-410 (QTNYG) the chain is on the periplasmic side. Residues 411–431 (LGAVGLYLAAMAGLTLIALLL) traverse the membrane as a helical segment. Residues 432-440 (THETRHQSL) are Cytoplasmic-facing.

It belongs to the major facilitator superfamily. Metabolite:H+ Symporter (MHS) family (TC 2.A.1.6) family.

The protein resides in the cell inner membrane. The protein is Inner membrane metabolite transport protein YhjE (yhjE) of Escherichia coli (strain K12).